A 514-amino-acid polypeptide reads, in one-letter code: ATP synthase subunit alpha (514 aa).

ATP is bound at residue Gly170 to Thr177.

The protein belongs to the ATPase alpha/beta chains family. In terms of assembly, F-type ATPases have 2 components, CF(1) - the catalytic core - and CF(0) - the membrane proton channel. CF(1) has five subunits: alpha(3), beta(3), gamma(1), delta(1), epsilon(1). CF(0) has three main subunits: a(1), b(2) and c(9-12). The alpha and beta chains form an alternating ring which encloses part of the gamma chain. CF(1) is attached to CF(0) by a central stalk formed by the gamma and epsilon chains, while a peripheral stalk is formed by the delta and b chains.

The protein localises to the cell inner membrane. The catalysed reaction is ATP + H2O + 4 H(+)(in) = ADP + phosphate + 5 H(+)(out). Produces ATP from ADP in the presence of a proton gradient across the membrane. The alpha chain is a regulatory subunit. This chain is ATP synthase subunit alpha, found in Alcanivorax borkumensis (strain ATCC 700651 / DSM 11573 / NCIMB 13689 / SK2).